The chain runs to 277 residues: Ribosomal RNA small subunit methyltransferase I (277 aa).

This sequence belongs to the methyltransferase superfamily. RsmI family.

Its subcellular location is the cytoplasm. It carries out the reaction cytidine(1402) in 16S rRNA + S-adenosyl-L-methionine = 2'-O-methylcytidine(1402) in 16S rRNA + S-adenosyl-L-homocysteine + H(+). Functionally, catalyzes the 2'-O-methylation of the ribose of cytidine 1402 (C1402) in 16S rRNA. This Mycoplasma genitalium (strain ATCC 33530 / DSM 19775 / NCTC 10195 / G37) (Mycoplasmoides genitalium) protein is Ribosomal RNA small subunit methyltransferase I.